Reading from the N-terminus, the 447-residue chain is Lipid II isoglutaminyl synthase (glutamine-hydrolyzing) subunit MurT (447 aa).

Cys205, Cys208, Cys227, and Cys230 together coordinate Zn(2+). The active site involves Asp355.

This sequence belongs to the MurCDEF family. MurT subfamily. In terms of assembly, forms a heterodimer with GatD.

It carries out the reaction beta-D-GlcNAc-(1-&gt;4)-Mur2Ac(oyl-L-Ala-gamma-D-Glu-L-Lys-D-Ala-D-Ala)-di-trans,octa-cis-undecaprenyl diphosphate + L-glutamine + ATP + H2O = beta-D-GlcNAc-(1-&gt;4)-Mur2Ac(oyl-L-Ala-D-isoglutaminyl-L-Lys-D-Ala-D-Ala)-di-trans,octa-cis-undecaprenyl diphosphate + L-glutamate + ADP + phosphate + H(+). It catalyses the reaction beta-D-GlcNAc-(1-&gt;4)-Mur2Ac(oyl-L-Ala-gamma-D-Glu-L-Lys-D-Ala-D-Ala)-di-trans,octa-cis-undecaprenyl diphosphate + ATP = beta-D-GlcNAc-(1-&gt;4)-Mur2Ac(oyl-L-Ala-gamma-D-O-P-Glu-L-Lys-D-Ala-D-Ala)-di-trans,octa-cis-undecaprenyl diphosphate + ADP. The enzyme catalyses beta-D-GlcNAc-(1-&gt;4)-Mur2Ac(oyl-L-Ala-gamma-D-O-P-Glu-L-Lys-D-Ala-D-Ala)-di-trans,octa-cis-undecaprenyl diphosphate + NH4(+) = beta-D-GlcNAc-(1-&gt;4)-Mur2Ac(oyl-L-Ala-D-isoglutaminyl-L-Lys-D-Ala-D-Ala)-di-trans,octa-cis-undecaprenyl diphosphate + phosphate + H(+). It functions in the pathway cell wall biogenesis; peptidoglycan biosynthesis. In terms of biological role, the lipid II isoglutaminyl synthase complex catalyzes the formation of alpha-D-isoglutamine in the cell wall lipid II stem peptide. The MurT subunit catalyzes the ATP-dependent amidation of D-glutamate residue of lipid II, converting it to an isoglutamine residue. In Streptococcus pneumoniae (strain ATCC BAA-255 / R6), this protein is Lipid II isoglutaminyl synthase (glutamine-hydrolyzing) subunit MurT.